Consider the following 464-residue polypeptide: Cysteine--tRNA ligase (464 aa).

Position 27 (Cys27) interacts with Zn(2+). A 'HIGH' region motif is present at residues 29–39 (PTVYNFFHIGN). Cys207, His232, and Glu236 together coordinate Zn(2+). The 'KMSKS' region signature appears at 264-268 (KMSKS). Lys267 contributes to the ATP binding site.

The protein belongs to the class-I aminoacyl-tRNA synthetase family. Monomer. Zn(2+) is required as a cofactor.

It is found in the cytoplasm. It carries out the reaction tRNA(Cys) + L-cysteine + ATP = L-cysteinyl-tRNA(Cys) + AMP + diphosphate. This chain is Cysteine--tRNA ligase, found in Clostridium acetobutylicum (strain ATCC 824 / DSM 792 / JCM 1419 / IAM 19013 / LMG 5710 / NBRC 13948 / NRRL B-527 / VKM B-1787 / 2291 / W).